Consider the following 208-residue polypeptide: Kinetochore protein Spc25 (208 aa).

A coiled-coil region spans residues 31–101; it reads SKIAAKHQLI…KKQRRDELMG (71 aa).

The protein belongs to the SPC25 family. In terms of assembly, component of the Ndc80 complex, which is composed of Ndc80, Nuf2 and Spc25.

The protein resides in the nucleus. The protein localises to the chromosome. It is found in the centromere. It localises to the kinetochore. In terms of biological role, acts as a component of the essential kinetochore-associated Ndc80 complex, which is required for chromosome segregation and spindle checkpoint activity during meiosis and mitosis. Required for kinetochore integrity and the organization of stable microtubule binding sites in the outer plate of the kinetochore. Participates in SAC signaling that responds specifically to disruptions in spindle microtubule dynamics. The NDC80 complex synergistically enhances the affinity of the SKA1 complex for microtubules and may allow the NDC80 complex to track depolymerizing microtubules. This Drosophila mojavensis (Fruit fly) protein is Kinetochore protein Spc25.